The following is a 169-amino-acid chain: Small ribosomal subunit protein uS5 (169 aa).

In terms of domain architecture, S5 DRBM spans 13–76; sequence LVEKLVSVRR…EKARRNMKDV (64 aa).

This sequence belongs to the universal ribosomal protein uS5 family. As to quaternary structure, part of the 30S ribosomal subunit. Contacts proteins S4 and S8.

Functionally, with S4 and S12 plays an important role in translational accuracy. Located at the back of the 30S subunit body where it stabilizes the conformation of the head with respect to the body. The protein is Small ribosomal subunit protein uS5 of Hydrogenovibrio crunogenus (strain DSM 25203 / XCL-2) (Thiomicrospira crunogena).